We begin with the raw amino-acid sequence, 156 residues long: Small ribosomal subunit protein uS7 (156 aa).

Belongs to the universal ribosomal protein uS7 family. In terms of assembly, part of the 30S ribosomal subunit. Contacts proteins S9 and S11.

Functionally, one of the primary rRNA binding proteins, it binds directly to 16S rRNA where it nucleates assembly of the head domain of the 30S subunit. Is located at the subunit interface close to the decoding center, probably blocks exit of the E-site tRNA. The polypeptide is Small ribosomal subunit protein uS7 (Latilactobacillus sakei subsp. sakei (strain 23K) (Lactobacillus sakei subsp. sakei)).